Reading from the N-terminus, the 344-residue chain is CRISPR-associated endonuclease Cas1 2 (344 aa).

Residues Glu-167, His-235, and Glu-250 each coordinate Mn(2+).

It belongs to the CRISPR-associated endonuclease Cas1 family. In terms of assembly, homodimer, forms a heterotetramer with a Cas2 homodimer. Mg(2+) is required as a cofactor. It depends on Mn(2+) as a cofactor.

Its function is as follows. CRISPR (clustered regularly interspaced short palindromic repeat), is an adaptive immune system that provides protection against mobile genetic elements (viruses, transposable elements and conjugative plasmids). CRISPR clusters contain spacers, sequences complementary to antecedent mobile elements, and target invading nucleic acids. CRISPR clusters are transcribed and processed into CRISPR RNA (crRNA). Acts as a dsDNA endonuclease. Involved in the integration of spacer DNA into the CRISPR cassette. In Rhodospirillum rubrum (strain ATCC 11170 / ATH 1.1.1 / DSM 467 / LMG 4362 / NCIMB 8255 / S1), this protein is CRISPR-associated endonuclease Cas1 2.